Consider the following 264-residue polypeptide: DNA repair protein RecO (264 aa).

The protein belongs to the RecO family.

Involved in DNA repair and RecF pathway recombination. The chain is DNA repair protein RecO from Leuconostoc citreum (strain KM20).